The primary structure comprises 500 residues: Probable cytosol aminopeptidase (500 aa).

Lysine 268 and aspartate 273 together coordinate Mn(2+). Lysine 280 is a catalytic residue. Residues aspartate 291, aspartate 350, and glutamate 352 each contribute to the Mn(2+) site. Residue arginine 354 is part of the active site.

This sequence belongs to the peptidase M17 family. Mn(2+) serves as cofactor.

It is found in the cytoplasm. The enzyme catalyses Release of an N-terminal amino acid, Xaa-|-Yaa-, in which Xaa is preferably Leu, but may be other amino acids including Pro although not Arg or Lys, and Yaa may be Pro. Amino acid amides and methyl esters are also readily hydrolyzed, but rates on arylamides are exceedingly low.. It carries out the reaction Release of an N-terminal amino acid, preferentially leucine, but not glutamic or aspartic acids.. Its function is as follows. Presumably involved in the processing and regular turnover of intracellular proteins. Catalyzes the removal of unsubstituted N-terminal amino acids from various peptides. The sequence is that of Probable cytosol aminopeptidase from Azoarcus sp. (strain BH72).